Consider the following 424-residue polypeptide: Hemagglutinin-esterase (424 aa).

The N-terminal stretch at 1-16 (MFLLPRFVLVSCIIGS) is a signal peptide. Residues 7–127 (FVLVSCIIGS…SNDIWMQNKG (121 aa)) are esterase domain 1. The Virion surface portion of the chain corresponds to 17–392 (LGFDNPPTNV…PICVYDPLPI (376 aa)). Ser-40 (nucleophile) is an active-site residue. A disulfide bridge connects residues Cys-44 and Cys-65. Asn-54, Asn-89, Asn-153, Asn-236, and Asn-301 each carry an N-linked (GlcNAc...) asparagine; by host glycan. 3 cysteine pairs are disulfide-bonded: Cys-113/Cys-162, Cys-197/Cys-276, and Cys-205/Cys-249. The receptor binding stretch occupies residues 128–266 (LFYTQVYKNM…GNYLAISNEL (139 aa)). Positions 267-379 (LLTVPTKAIC…RCPTAADINT (113 aa)) are esterase domain 2. Cys-307 and Cys-312 form a disulfide bridge. Asn-316 carries N-linked (GlcNAc...) asparagine; by host glycosylation. Catalysis depends on charge relay system residues Asp-326 and His-329. A disulfide bridge connects residues Cys-347 and Cys-371. N-linked (GlcNAc...) asparagine; by host glycosylation is present at Asn-358. Residues 393–413 (ILLGILLGVAVIIIVVLLLYF) form a helical membrane-spanning segment. The Intravirion segment spans residues 414–424 (MVDNGTRLHDA). Asn-417 carries an N-linked (GlcNAc...) asparagine; by host glycan.

It belongs to the influenza type C/coronaviruses hemagglutinin-esterase family. As to quaternary structure, homodimer; disulfide-linked. Forms a complex with the M protein in the pre-Golgi. Associates then with S-M complex to form a ternary complex S-M-HE. In terms of processing, N-glycosylated in the host RER.

The protein localises to the virion membrane. Its subcellular location is the host cell membrane. It carries out the reaction N-acetyl-9-O-acetylneuraminate + H2O = N-acetylneuraminate + acetate + H(+). The enzyme catalyses N-acetyl-4-O-acetylneuraminate + H2O = N-acetylneuraminate + acetate + H(+). In terms of biological role, structural protein that makes short spikes at the surface of the virus. Contains receptor binding and receptor-destroying activities. Mediates de-O-acetylation of N-acetyl-4-O-acetylneuraminic acid, which is probably the receptor determinant recognized by the virus on the surface of erythrocytes and susceptible cells. This receptor-destroying activity is important for virus release as it probably helps preventing self-aggregation and ensures the efficient spread of the progeny virus from cell to cell. May serve as a secondary viral attachment protein for initiating infection, the spike protein being the major one. May become a target for both the humoral and the cellular branches of the immune system. The sequence is that of Hemagglutinin-esterase from Bovine coronavirus (strain 98TXSF-110-LUN) (BCoV-LUN).